The chain runs to 384 residues: Formate-dependent phosphoribosylglycinamide formyltransferase (384 aa).

N(1)-(5-phospho-beta-D-ribosyl)glycinamide is bound by residues 14–15 and E74; that span reads EL. ATP-binding positions include R106, K147, 152–157, 187–190, and E195; these read SSGKGQ and EEFI. The ATP-grasp domain maps to 111 to 300; it reads RLAAETLGLA…EFALHVRAIL (190 aa). Residues E259 and E271 each contribute to the Mg(2+) site. N(1)-(5-phospho-beta-D-ribosyl)glycinamide contacts are provided by residues D278, K348, and 355 to 356; that span reads RR.

The protein belongs to the PurK/PurT family. In terms of assembly, homodimer.

The catalysed reaction is N(1)-(5-phospho-beta-D-ribosyl)glycinamide + formate + ATP = N(2)-formyl-N(1)-(5-phospho-beta-D-ribosyl)glycinamide + ADP + phosphate + H(+). It participates in purine metabolism; IMP biosynthesis via de novo pathway; N(2)-formyl-N(1)-(5-phospho-D-ribosyl)glycinamide from N(1)-(5-phospho-D-ribosyl)glycinamide (formate route): step 1/1. Catalyzes two reactions: the first one is the production of beta-formyl glycinamide ribonucleotide (GAR) from formate, ATP and beta GAR; the second, a side reaction, is the production of acetyl phosphate and ADP from acetate and ATP. Functionally, involved in the de novo purine biosynthesis. Catalyzes the transfer of formate to 5-phospho-ribosyl-glycinamide (GAR), producing 5-phospho-ribosyl-N-formylglycinamide (FGAR). Formate is provided by PurU via hydrolysis of 10-formyl-tetrahydrofolate. In Bacillus subtilis (strain 168), this protein is Formate-dependent phosphoribosylglycinamide formyltransferase.